The following is a 347-amino-acid chain: Phenylalanine--tRNA ligase alpha subunit (347 aa).

Residue E265 coordinates Mg(2+).

It belongs to the class-II aminoacyl-tRNA synthetase family. Phe-tRNA synthetase alpha subunit type 1 subfamily. As to quaternary structure, tetramer of two alpha and two beta subunits. Requires Mg(2+) as cofactor.

The protein resides in the cytoplasm. The catalysed reaction is tRNA(Phe) + L-phenylalanine + ATP = L-phenylalanyl-tRNA(Phe) + AMP + diphosphate + H(+). In Mycolicibacterium paratuberculosis (strain ATCC BAA-968 / K-10) (Mycobacterium paratuberculosis), this protein is Phenylalanine--tRNA ligase alpha subunit.